The sequence spans 445 residues: Reticulon-4 receptor-like 1 (445 aa).

The first 24 residues, 1-24 (MLRKGCCVELLLLLLAGELPLSGG), serve as a signal peptide directing secretion. The region spanning 25–54 (CPRDCVCYPSPMTVSCQAHNFAAIPEGIPE) is the LRRNT domain. LRR repeat units lie at residues 55–76 (DSER…HFSP), 77–98 (AMVT…TFEG), 101–123 (HLEE…TFQG), 126–147 (KLHA…IFGG), 150–171 (SLQY…IFVD), 174–195 (NLSH…IFRG), 198–219 (NLDR…AFHD), and 222–243 (RLTT…CLAP). The LRRCT domain occupies 255 to 306 (NAWDCGCRARSLWEWLRRFRGSSSVVPCATPELRQGQDLKSLRVEDFRNCTG). Disordered regions lie at residues 304 to 380 (CTGP…ELPE) and 401 to 421 (RPKR…SGVQ). 2 stretches are compositionally biased toward basic residues: residues 352–366 (GSKK…HRNR) and 401–413 (RPKR…RRTP). The GPI-anchor amidated serine moiety is linked to residue serine 424. The helical transmembrane segment at 424 to 444 (SSGTALGVSLLAWILGLVVSL) threads the bilayer. The propeptide at 425–445 (SGTALGVSLLAWILGLVVSLR) is removed in mature form.

It belongs to the Nogo receptor family. In terms of assembly, identified in a complex that contains RTN4R, RTN4RL1 and NGFR; the interaction depends on the presence of chondroitin sulfate proteoglycans. Does not interact with MAG, OMG and RTN4. Detected in brain (at protein level). Expressed in various regions of the brain, including the cerebral cortex, hippocampus, striatum, thalamus and cerebellum.

Its subcellular location is the cell membrane. The protein localises to the membrane raft. The protein resides in the perikaryon. It is found in the cell projection. In terms of biological role, cell surface receptor. Plays a functionally redundant role in postnatal brain development and in regulating axon regeneration in the adult central nervous system. Contributes to normal axon migration across the brain midline and normal formation of the corpus callosum. Protects motoneurons against apoptosis; protection against apoptosis is probably mediated by MAG. Plays a role in inhibiting neurite outgrowth and axon regeneration via its binding to neuronal chondroitin sulfate proteoglycans. Binds heparin. Like other family members, plays a role in restricting the number dendritic spines and the number of synapses that are formed during brain development. Signaling mediates activation of Rho and downstream reorganization of the actin cytoskeleton. The polypeptide is Reticulon-4 receptor-like 1 (Rattus norvegicus (Rat)).